Here is a 234-residue protein sequence, read N- to C-terminus: LRP chaperone MESD (234 aa).

The first 33 residues, 1 to 33 (MAASRWARKAVVLLCASDLLLLLLLLPPPGSCA), serve as a signal peptide directing secretion. Residues 1-164 (MAASRWARKA…DRAIFMLRDG (164 aa)) are chaperone domain. Disordered regions lie at residues 31-95 (SCAA…DFSK) and 187-234 (GQVY…REDL). Residues 54–70 (DIRDYNDADMARLLEQW) show a composition bias toward basic and acidic residues. Acidic residues predominate over residues 71-80 (EKDDDIEEGD). The interval 165–204 (SYAWEIKDFLVGQDRCADVTLEGQVYPGKGGGSKEKNKTK) is escort domain. Residues 196-234 (GSKEKNKTKQDKGKKKKEGDLKSRSSKEENRAGNKREDL) are compositionally biased toward basic and acidic residues. N201 carries an N-linked (GlcNAc...) asparagine glycan. The Prevents secretion from ER motif lies at 231–234 (REDL).

It belongs to the MESD family. In terms of assembly, monomer. Interacts with LRP5; the interaction prevents LRP5 from forming aggregates and chaperones LRP6 to the plasma membrane. Interacts with LRP6; the interaction prevents LRP6 from forming aggregates and chaperones LRP6 to the plasma membrane. Interacts with LRP4; the interaction promotes glycosylation of LRP4 and its cell-surface expression.

Its subcellular location is the endoplasmic reticulum. Chaperone specifically assisting the folding of beta-propeller/EGF modules within the family of low-density lipoprotein receptors (LDLRs). Acts as a modulator of the Wnt pathway through chaperoning the coreceptors of the canonical Wnt pathway, LRP5 and LRP6, to the plasma membrane. Essential for specification of embryonic polarity and mesoderm induction. Plays an essential role in neuromuscular junction (NMJ) formation by promoting cell-surface expression of LRP4. May regulate phagocytosis of apoptotic retinal pigment epithelium (RPE) cells. The polypeptide is LRP chaperone MESD (Homo sapiens (Human)).